A 761-amino-acid chain; its full sequence is T-box protein 1 (761 aa).

Disordered regions lie at residues 1-85 and 167-210; these read MLGR…QPLT and QTDP…CSSP. Polar residues-rich tracts occupy residues 37–61 and 167–179; these read DLQN…NQAG and QTDP…FPQA. 2 stretches are compositionally biased toward low complexity: residues 180-191 and 198-210; these read SPSDLSTTSSQS and SSPS…CSSP. The T-box DNA-binding region spans 287–456; the sequence is LWRKFHEHRT…HNPFAKGFRD (170 aa). Over residues 496–510 the composition is skewed to polar residues; sequence TTGFPCQTNPTQRSN. Disordered regions lie at residues 496 to 515, 545 to 612, and 637 to 687; these read TTGF…QHEG, SGDA…TPAH, and VCSS…LLTT. A compositionally biased stretch (basic and acidic residues) spans 600–612; the sequence is GCERSNEKHTPAH. Over residues 637-646 the composition is skewed to polar residues; it reads VCSSDNSNPD. A compositionally biased stretch (low complexity) spans 656–687; that stretch reads SPAGSGSPSVTSGTSLFTSGSSAAPSPPLLTT.

Its subcellular location is the nucleus. Probable transcriptional regulator involved in developmental processes. This chain is T-box protein 1 (tbr1), found in Patiria pectinifera (Starfish).